The chain runs to 454 residues: Inactive tetrahydroanabasine acetyltransferase pauper allele (454 aa).

This sequence belongs to the plant acyltransferase family. As to quaternary structure, monomer.

The sequence is that of Inactive tetrahydroanabasine acetyltransferase pauper allele from Lupinus albus (White lupine).